A 110-amino-acid chain; its full sequence is Nucleoid-associated protein SYO3AOP1_1366 (110 aa).

This sequence belongs to the YbaB/EbfC family. As to quaternary structure, homodimer.

It localises to the cytoplasm. The protein resides in the nucleoid. In terms of biological role, binds to DNA and alters its conformation. May be involved in regulation of gene expression, nucleoid organization and DNA protection. This is Nucleoid-associated protein SYO3AOP1_1366 from Sulfurihydrogenibium sp. (strain YO3AOP1).